The chain runs to 939 residues: Probable importin ECU10_0620 (939 aa).

Residues 23–90 form the Importin N-terminal domain; the sequence is AEAMLMDLEK…VENILDLFLY (68 aa).

It belongs to the importin beta family.

It localises to the nucleus. It is found in the cytoplasm. Its function is as follows. Active in protein import into the nucleus. This is Probable importin ECU10_0620 from Encephalitozoon cuniculi (strain GB-M1) (Microsporidian parasite).